A 70-amino-acid polypeptide reads, in one-letter code: Large ribosomal subunit protein bL31 (70 aa).

The residue at position 8 (Lys-8) is an N6-acetyllysine. Zn(2+) contacts are provided by Cys-16, Cys-18, Cys-37, and Cys-40.

Belongs to the bacterial ribosomal protein bL31 family. Type A subfamily. Part of the 50S ribosomal subunit. Requires Zn(2+) as cofactor.

Its function is as follows. Binds the 23S rRNA. This is Large ribosomal subunit protein bL31 from Escherichia coli O6:K15:H31 (strain 536 / UPEC).